The primary structure comprises 73 residues: Large ribosomal subunit protein bL31 (73 aa).

The protein belongs to the bacterial ribosomal protein bL31 family. Type A subfamily. Part of the 50S ribosomal subunit.

Its function is as follows. Binds the 23S rRNA. The chain is Large ribosomal subunit protein bL31 from Mesorhizobium japonicum (strain LMG 29417 / CECT 9101 / MAFF 303099) (Mesorhizobium loti (strain MAFF 303099)).